Reading from the N-terminus, the 199-residue chain is MAERPPLILASRSPYRRALLEQVRLPHEAIPADVDESRHPDEPAHDYVLRLARAKAEAVAERRPDALVIGSDQAAVLGERVLGKPGSEARAREQLATASGQCVTFLTGVAVVHAAGGRRQSDVVPYRVHFRDLDETTIARYVALEQPLDCAGSFKSEGLGAVLFQRMEGSDPNALIGLPLIRLFDFLLACGYPLIGSEE.

The active-site Proton acceptor is aspartate 72.

The protein belongs to the Maf family. YceF subfamily. A divalent metal cation is required as a cofactor.

The protein resides in the cytoplasm. The enzyme catalyses N(7)-methyl-GTP + H2O = N(7)-methyl-GMP + diphosphate + H(+). Functionally, nucleoside triphosphate pyrophosphatase that hydrolyzes 7-methyl-GTP (m(7)GTP). May have a dual role in cell division arrest and in preventing the incorporation of modified nucleotides into cellular nucleic acids. This Alkalilimnicola ehrlichii (strain ATCC BAA-1101 / DSM 17681 / MLHE-1) protein is 7-methyl-GTP pyrophosphatase.